The primary structure comprises 278 residues: Ribosomal RNA small subunit methyltransferase A (278 aa).

The S-adenosyl-L-methionine site is built by N28, L30, G55, E77, D103, and N122.

The protein belongs to the class I-like SAM-binding methyltransferase superfamily. rRNA adenine N(6)-methyltransferase family. RsmA subfamily.

It is found in the cytoplasm. The catalysed reaction is adenosine(1518)/adenosine(1519) in 16S rRNA + 4 S-adenosyl-L-methionine = N(6)-dimethyladenosine(1518)/N(6)-dimethyladenosine(1519) in 16S rRNA + 4 S-adenosyl-L-homocysteine + 4 H(+). In terms of biological role, specifically dimethylates two adjacent adenosines (A1518 and A1519) in the loop of a conserved hairpin near the 3'-end of 16S rRNA in the 30S particle. May play a critical role in biogenesis of 30S subunits. The polypeptide is Ribosomal RNA small subunit methyltransferase A (Cereibacter sphaeroides (strain ATCC 17023 / DSM 158 / JCM 6121 / CCUG 31486 / LMG 2827 / NBRC 12203 / NCIMB 8253 / ATH 2.4.1.) (Rhodobacter sphaeroides)).